We begin with the raw amino-acid sequence, 323 residues long: Porphobilinogen deaminase (323 aa).

Cys251 bears the S-(dipyrrolylmethanemethyl)cysteine mark.

Belongs to the HMBS family. Monomer. Dipyrromethane is required as a cofactor.

The enzyme catalyses 4 porphobilinogen + H2O = hydroxymethylbilane + 4 NH4(+). The protein operates within porphyrin-containing compound metabolism; protoporphyrin-IX biosynthesis; coproporphyrinogen-III from 5-aminolevulinate: step 2/4. It participates in porphyrin-containing compound metabolism; chlorophyll biosynthesis. Functionally, tetrapolymerization of the monopyrrole PBG into the hydroxymethylbilane pre-uroporphyrinogen in several discrete steps. In Nostoc sp. (strain PCC 7120 / SAG 25.82 / UTEX 2576), this protein is Porphobilinogen deaminase (hemC).